The chain runs to 361 residues: Carbon monoxide-induced hydrogenase (361 aa).

Ni(2+)-binding residues include Cys-64, Cys-67, Cys-355, and Cys-358.

To E.coli formate hydrogenlyase hydrogenase isozyme 3 and to bovine mitochondrial NADH-ubiquinone oxidoreductase. Ni(2+) is required as a cofactor.

Its function is as follows. The carbon monoxide dehydrogenase (CODH) oxidizes carbon monoxide coupled, via CooF, to the reduction of a hydrogen cation by a hydrogenase (probably CooH). The chain is Carbon monoxide-induced hydrogenase (cooH) from Rhodospirillum rubrum.